The following is a 480-amino-acid chain: Protein nucleotidyltransferase YdiU (480 aa).

Residues glycine 86, glycine 88, arginine 89, lysine 109, aspartate 121, glycine 122, arginine 172, and arginine 179 each coordinate ATP. Aspartate 248 functions as the Proton acceptor in the catalytic mechanism. Mg(2+) is bound by residues asparagine 249 and aspartate 258. Aspartate 258 contributes to the ATP binding site.

The protein belongs to the SELO family. Requires Mg(2+) as cofactor. Mn(2+) serves as cofactor.

The catalysed reaction is L-seryl-[protein] + ATP = 3-O-(5'-adenylyl)-L-seryl-[protein] + diphosphate. The enzyme catalyses L-threonyl-[protein] + ATP = 3-O-(5'-adenylyl)-L-threonyl-[protein] + diphosphate. It carries out the reaction L-tyrosyl-[protein] + ATP = O-(5'-adenylyl)-L-tyrosyl-[protein] + diphosphate. It catalyses the reaction L-histidyl-[protein] + UTP = N(tele)-(5'-uridylyl)-L-histidyl-[protein] + diphosphate. The catalysed reaction is L-seryl-[protein] + UTP = O-(5'-uridylyl)-L-seryl-[protein] + diphosphate. The enzyme catalyses L-tyrosyl-[protein] + UTP = O-(5'-uridylyl)-L-tyrosyl-[protein] + diphosphate. Its function is as follows. Nucleotidyltransferase involved in the post-translational modification of proteins. It can catalyze the addition of adenosine monophosphate (AMP) or uridine monophosphate (UMP) to a protein, resulting in modifications known as AMPylation and UMPylation. This chain is Protein nucleotidyltransferase YdiU, found in Salmonella newport (strain SL254).